Consider the following 321-residue polypeptide: Beta-1,3-N-acetylglucosaminyltransferase manic fringe (321 aa).

At M1–R7 the chain is on the cytoplasmic side. Residues G8–H27 form a helical; Signal-anchor for type II membrane protein membrane-spanning segment. Residues L28–R321 lie on the Lumenal side of the membrane. Substrate is bound at residue R70. The N-linked (GlcNAc...) asparagine glycan is linked to N109. Cystine bridges form between C110–C121 and C139–C202. Residue D143 participates in substrate binding. Position 144 (D144) interacts with Mn(2+). An N-linked (GlcNAc...) asparagine glycan is attached at N185. D232 is an active-site residue. H256 serves as a coordination point for Mn(2+). Residues C306 and C315 are joined by a disulfide bond.

It belongs to the glycosyltransferase 31 family. Mn(2+) is required as a cofactor.

It is found in the golgi apparatus membrane. It carries out the reaction 3-O-(alpha-L-fucosyl)-L-threonyl-[EGF-like domain protein] + UDP-N-acetyl-alpha-D-glucosamine = 3-O-(N-acetyl-beta-D-glucosaminyl-(1-&gt;3)-alpha-L-fucosyl)-L-threonyl-[EGF-like domain protein] + UDP + H(+). The catalysed reaction is 3-O-(alpha-L-fucosyl)-L-seryl-[EGF-like domain protein] + UDP-N-acetyl-alpha-D-glucosamine = 3-O-(N-acetyl-beta-D-glucosaminyl-(1-&gt;3)-alpha-L-fucosyl)-L-seryl-[EGF-like domain protein] + UDP + H(+). In terms of biological role, glycosyltransferase that initiates the elongation of O-linked fucose residues attached to EGF-like repeats in the extracellular domain of Notch molecules. Modulates NOTCH1 activity by modifying O-fucose residues at specific EGF-like domains resulting in inhibition of NOTCH1 activation by JAG1 and enhancement of NOTCH1 activation by DLL1 via an increase in its binding to DLL1. The protein is Beta-1,3-N-acetylglucosaminyltransferase manic fringe (MFNG) of Pan troglodytes (Chimpanzee).